The sequence spans 874 residues: Probable inorganic carbon transporter subunit DabA (874 aa).

4 residues coordinate Zn(2+): cysteine 398, aspartate 400, histidine 580, and cysteine 595.

The protein belongs to the inorganic carbon transporter (TC 9.A.2) DabA family. Forms a complex with DabB. It depends on Zn(2+) as a cofactor.

It localises to the cell membrane. Part of an energy-coupled inorganic carbon pump. This chain is Probable inorganic carbon transporter subunit DabA, found in Bacillus thuringiensis subsp. konkukian (strain 97-27).